Here is a 595-residue protein sequence, read N- to C-terminus: NADH-quinone oxidoreductase subunit C/D (595 aa).

The interval 1-186 is NADH dehydrogenase I subunit C; that stretch reads MVTDNSKATD…TPYFLNNAKQ (186 aa). Positions 210–595 are NADH dehydrogenase I subunit D; it reads DFMFLNLGPN…IDIVMADTDR (386 aa).

In the N-terminal section; belongs to the complex I 30 kDa subunit family. This sequence in the C-terminal section; belongs to the complex I 49 kDa subunit family. In terms of assembly, NDH-1 is composed of 13 different subunits. Subunits NuoB, CD, E, F, and G constitute the peripheral sector of the complex.

It localises to the cell inner membrane. It carries out the reaction a quinone + NADH + 5 H(+)(in) = a quinol + NAD(+) + 4 H(+)(out). In terms of biological role, NDH-1 shuttles electrons from NADH, via FMN and iron-sulfur (Fe-S) centers, to quinones in the respiratory chain. The immediate electron acceptor for the enzyme in this species is believed to be ubiquinone. Couples the redox reaction to proton translocation (for every two electrons transferred, four hydrogen ions are translocated across the cytoplasmic membrane), and thus conserves the redox energy in a proton gradient. In Psychrobacter sp. (strain PRwf-1), this protein is NADH-quinone oxidoreductase subunit C/D.